The chain runs to 3381 residues: Versican core protein (3381 aa).

An N-terminal signal peptide occupies residues 1 to 20; it reads MLINIKSILWMCSTLIAAHA. Residues 21-147 enclose the Ig-like V-type domain; sequence LQKVNMEKSP…EDTQDTVSLT (127 aa). Intrachain disulfides connect cysteine 44-cysteine 131, cysteine 173-cysteine 244, cysteine 197-cysteine 218, cysteine 271-cysteine 346, and cysteine 295-cysteine 316. An N-linked (GlcNAc...) asparagine glycan is attached at asparagine 57. Link domains follow at residues 151 to 246 and 252 to 348; these read VVFH…YCYV and DVFH…YCFK. N-linked (GlcNAc...) asparagine glycans are attached at residues asparagine 331 and asparagine 352. Residues 349–1336 form a GAG-alpha (glucosaminoglycan attachment domain) region; the sequence is PKQNISEATT…IIEVRENKTG (988 aa). The span at 417 to 427 shows a compositional bias: polar residues; sequence PLTSTHRSATE. Disordered stretches follow at residues 417–437 and 603–623; these read PLTS…SMKK and ESVS…MDHR. Serine 660 carries an O-linked (Xyl...) (chondroitin sulfate) serine glycan. Residues 816–866 are disordered; the sequence is DNTTSKPLGSTEHVGSPKLPPALITTTGVSGKDKEMPSLTEDGRDEFTRIP. N-linked (GlcNAc...) asparagine glycosylation is present at asparagine 817. The span at 846 to 863 shows a compositional bias: basic and acidic residues; it reads GKDKEMPSLTEDGRDEFT. Asparagine 965 and asparagine 1017 each carry an N-linked (GlcNAc...) asparagine glycan. Positions 1043–1052 are enriched in basic and acidic residues; it reads EDFLWKEQTP. 2 disordered regions span residues 1043 to 1081 and 1218 to 1244; these read EDFL…SDGS and FSSA…PDEE. Asparagine 1333 carries N-linked (GlcNAc...) asparagine glycosylation. The segment at 1337–3074 is GAG-beta; that stretch reads RMSDFSVSGH…VEGTAVYLPG (1738 aa). A disordered region spans residues 1338–1362; sequence MSDFSVSGHPIDSESKEDEPCSEET. The segment covering 1352–1362 has biased composition (acidic residues); sequence SKEDEPCSEET. Asparagine 1393 carries an N-linked (GlcNAc...) asparagine glycan. Basic and acidic residues predominate over residues 1417–1428; that stretch reads KDPEAAEARRGQ. Disordered stretches follow at residues 1417 to 1446, 1455 to 1474, and 1484 to 1512; these read KDPE…ESDS, GLPT…SLEI, and TAEP…GPDS. N-linked (GlcNAc...) asparagine glycans are attached at residues asparagine 1437 and asparagine 1463. O-linked (Xyl...) (chondroitin sulfate) serine glycosylation is found at serine 1539 and serine 1621. N-linked (GlcNAc...) asparagine glycosylation is present at asparagine 1653. The interval 1708–1785 is disordered; the sequence is PPLEETTRKE…ERETTSSTVV (78 aa). Positions 1712–1721 are enriched in basic and acidic residues; the sequence is ETTRKEEEKG. Residues 1726 to 1738 show a composition bias toward polar residues; that stretch reads ASTVEVHSPTQRL. The segment covering 1743 to 1761 has biased composition (low complexity); it reads SPSELESSSETPPDDSAAA. Over residues 1764–1784 the composition is skewed to polar residues; it reads KSFTSQMTPTQSERETTSSTV. O-linked (Xyl...) (chondroitin sulfate) serine glycosylation is found at serine 1928 and serine 1952. Positions 1964-1976 are enriched in polar residues; the sequence is PSVTPTSDLSNHT. 2 disordered regions span residues 1964 to 1986 and 2041 to 2126; these read PSVT…GSTL and EGAI…QSSV. Residues asparagine 1974, asparagine 2045, asparagine 2074, and asparagine 2103 are each glycosylated (N-linked (GlcNAc...) asparagine). Basic and acidic residues predominate over residues 2065–2075; the sequence is STEEGEVKENH. At serine 2109 the chain carries Phosphoserine. O-linked (Xyl...) (chondroitin sulfate) serine glycosylation is found at serine 2240 and serine 2247. Asparagine 2263, asparagine 2290, and asparagine 2356 each carry an N-linked (GlcNAc...) asparagine glycan. Disordered regions lie at residues 2338 to 2388, 2490 to 2512, and 2594 to 2615; these read EGPF…AETK, EQRE…EKAT, and TDLD…TQVQ. 2 stretches are compositionally biased toward polar residues: residues 2345 to 2357 and 2367 to 2383; these read LTFS…PQNQ and TSRP…ENSV. Residues serine 2607 and serine 2608 each carry the phosphoserine modification. Threonine 2612 carries the phosphothreonine modification. Asparagine 2623 and asparagine 2641 each carry an N-linked (GlcNAc...) asparagine glycan. Serine 2714, serine 2715, and serine 2759 each carry an O-linked (Xyl...) (chondroitin sulfate) serine glycan. The interval 2819–2893 is disordered; that stretch reads PPLSIHLGSG…EPSEDESKPK (75 aa). Residues 2840–2851 are compositionally biased toward polar residues; that stretch reads ALPSTDASTPPV. Residues asparagine 2919 and asparagine 3052 are each glycosylated (N-linked (GlcNAc...) asparagine). The region spanning 3074-3110 is the EGF-like 1 domain; that stretch reads GPDRCKMNPCLNGGTCYPTETSYVCTCVPGYSGDRCE. 11 disulfides stabilise this stretch: cysteine 3078-cysteine 3089, cysteine 3083-cysteine 3098, cysteine 3100-cysteine 3109, cysteine 3116-cysteine 3127, cysteine 3121-cysteine 3136, cysteine 3138-cysteine 3147, cysteine 3154-cysteine 3165, cysteine 3182-cysteine 3274, cysteine 3250-cysteine 3266, cysteine 3281-cysteine 3324, and cysteine 3310-cysteine 3337. Residues 3112–3148 form the EGF-like 2; calcium-binding domain; sequence DFDECHSNPCRNGATCIDGFNTFRCLCLPSYVGALCE. The C-type lectin domain maps to 3161 to 3275; that stretch reads FQGQCYKYFA…CNYHLTYTCK (115 aa). The Sushi domain occupies 3279–3339; that stretch reads VACGQPPVVE…WAMPKITCLN (61 aa). 2 N-linked (GlcNAc...) asparagine glycosylation sites follow: asparagine 3354 and asparagine 3364. Positions 3355-3365 are enriched in polar residues; that stretch reads SSSAKDNSINT. The tract at residues 3355 to 3381 is disordered; the sequence is SSSAKDNSINTSKHDHRWSRRWQESRR.

Belongs to the aggrecan/versican proteoglycan family. As to quaternary structure, interacts with FBLN1. Post-translationally, phosphorylated by FAM20C in the extracellular medium. Proteolytically cleaved by ADAMTS5 and ADAMTS15 in the pericellular matrix surrounding myoblasts, facilitating myoblast contact and fusion which is required for skeletal muscle development and regeneration. Cerebral white matter. Isoform V0 and isoform V1 are expressed in the central nervous system, and in a number of mesenchymal and epithelial tissues; the major isoform V2 is restricted to the central nervous system.

The protein localises to the secreted. Its subcellular location is the extracellular space. It localises to the extracellular matrix. The protein resides in the cell projection. It is found in the cilium. The protein localises to the photoreceptor outer segment. Its subcellular location is the interphotoreceptor matrix. In terms of biological role, may play a role in intercellular signaling and in connecting cells with the extracellular matrix. May take part in the regulation of cell motility, growth and differentiation. Binds hyaluronic acid. The protein is Versican core protein (VCAN) of Bos taurus (Bovine).